We begin with the raw amino-acid sequence, 515 residues long: Nectin-1 (515 aa).

An N-terminal signal peptide occupies residues 1 to 30 (MARMGLAGAAGRWWGLALGLTAFFLPGAHT). An Ig-like V-type domain is found at 31–141 (QVVQVNDSMY…GNRESQLNLT (111 aa)). At 31–355 (QVVQVNDSMY…GRRAGQVPTA (325 aa)) the chain is on the extracellular side. N-linked (GlcNAc...) asparagine glycans are attached at residues N36, N72, N139, N202, N286, N297, N307, and N332. A disulfide bond links C51 and C124. Ig-like C2-type domains are found at residues 145-243 (KPTN…TLNV) and 247-334 (PEVT…VNIT). 2 cysteine pairs are disulfide-bonded: C172-C226 and C269-C316. The tract at residues 282 to 299 (WTTLNGSLPKGVEAQNRT) is interaction with FGFR. Residues 356–376 (IIGGVVGSILLVLFVVGGIVV) form a helical membrane-spanning segment. At 377–515 (ALCRRRHTFK…SFISKKEWYV (139 aa)) the chain is on the cytoplasmic side. Positions 400 to 486 (YSKAGIPQHH…DGYGDRTLGY (87 aa)) are disordered. Phosphoserine is present on residues S422, S434, and S435. At Y436 the chain carries Phosphotyrosine. Acidic residues predominate over residues 436 to 445 (YEEEEEEEGG). A compositionally biased stretch (basic and acidic residues) spans 446 to 464 (GGERKVGGPHPKYDEDAKR). The residue at position 509 (S509) is a Phosphoserine.

It belongs to the nectin family. In terms of assembly, (Microbial infection) Interacts with herpes pseudorabies virus/PRV envelope glycoprotein D.

The protein localises to the cell membrane. It localises to the cell junction. It is found in the adherens junction. The protein resides in the presynaptic cell membrane. In terms of biological role, (Microbial infection) Acts as a receptor for herpes simplex virus 1/HHV-1, herpes simplex virus 2/HHV-2, and pseudorabies virus/PRV. In Sus scrofa (Pig), this protein is Nectin-1.